A 428-amino-acid chain; its full sequence is Histidinol dehydrogenase (428 aa).

NAD(+) is bound by residues Y125, Q186, and N209. Substrate is bound by residues S232, Q254, and H257. The Zn(2+) site is built by Q254 and H257. Residues E322 and H323 each act as proton acceptor in the active site. Substrate-binding residues include H323, D356, E410, and H415. D356 is a Zn(2+) binding site. Zn(2+) is bound at residue H415.

This sequence belongs to the histidinol dehydrogenase family. Zn(2+) serves as cofactor.

It catalyses the reaction L-histidinol + 2 NAD(+) + H2O = L-histidine + 2 NADH + 3 H(+). It participates in amino-acid biosynthesis; L-histidine biosynthesis; L-histidine from 5-phospho-alpha-D-ribose 1-diphosphate: step 9/9. Functionally, catalyzes the sequential NAD-dependent oxidations of L-histidinol to L-histidinaldehyde and then to L-histidine. The sequence is that of Histidinol dehydrogenase from Lactiplantibacillus plantarum (strain ATCC BAA-793 / NCIMB 8826 / WCFS1) (Lactobacillus plantarum).